A 364-amino-acid polypeptide reads, in one-letter code: Putative F-box/kelch-repeat protein At1g12170 (364 aa).

One can recognise an F-box domain in the interval 1–50 (MMHVILPWELVEEILYRVPPLSLTRFKIVCKQWNTLFKSKSFVNNHLVRV). Kelch repeat units follow at residues 156–205 (SIYN…LNGN) and 328–364 (CVYI…IPVP).

The protein is Putative F-box/kelch-repeat protein At1g12170 of Arabidopsis thaliana (Mouse-ear cress).